Here is a 748-residue protein sequence, read N- to C-terminus: Polyribonucleotide nucleotidyltransferase (748 aa).

Mg(2+) is bound by residues D484 and D490. Residues 551-610 (PRIETMSVPKDKIRDVIGTGGKVIREIVATTGAKVDIEDDGTVRLSSSDPANIEAAREWI) form the KH domain. An S1 motif domain is found at 620–688 (GKIYNGKVVN…NRGKVRLSMR (69 aa)). The interval 693–748 (ETGAELDDNRPPRENAERRGGERPRRDRGPRRESGDRPARRDMEPEFAPAFLRKDS) is disordered. Over residues 699–736 (DDNRPPRENAERRGGERPRRDRGPRRESGDRPARRDME) the composition is skewed to basic and acidic residues.

It belongs to the polyribonucleotide nucleotidyltransferase family. It depends on Mg(2+) as a cofactor.

Its subcellular location is the cytoplasm. It catalyses the reaction RNA(n+1) + phosphate = RNA(n) + a ribonucleoside 5'-diphosphate. Its function is as follows. Involved in mRNA degradation. Catalyzes the phosphorolysis of single-stranded polyribonucleotides processively in the 3'- to 5'-direction. The chain is Polyribonucleotide nucleotidyltransferase from Zymomonas mobilis subsp. mobilis (strain ATCC 31821 / ZM4 / CP4).